The chain runs to 477 residues: Interferon gamma receptor 1 (477 aa).

A signal peptide spans 1–25 (MGPQAAAGRMILLVVLMLSAKVGSG). The Extracellular segment spans residues 26-254 (ALTSTEDPEP…PPFHDDRKDS (229 aa)). N-linked (GlcNAc...) asparagine glycans are attached at residues Asn-61 and Asn-85. 4 disulfide bridges follow: Cys-83–Cys-91, Cys-128–Cys-174, Cys-203–Cys-208, and Cys-222–Cys-243. Residues 255–275 (IWILVVAPLTVFTVVILVFAY) form a helical membrane-spanning segment. Over 276–477 (WYTKKNSFKR…RLTGEAQELS (202 aa)) the chain is Cytoplasmic. Disordered regions lie at residues 335 to 386 (TVTA…LSSN) and 402 to 446 (SDSG…SGYD). Residue Ser-362 is modified to Phosphoserine. The residue at position 367 (Thr-367) is a Phosphothreonine. Ser-370 is modified (phosphoserine). Phosphothreonine is present on residues Thr-373 and Thr-375. The segment covering 375 to 386 (TQRRSFSLLSSN) has biased composition (polar residues). 2 positions are modified to phosphoserine: Ser-379 and Ser-402. Residues 402–416 (SDSGLVGSGSSISDL) show a composition bias toward low complexity. At Tyr-445 the chain carries Phosphotyrosine.

It belongs to the type II cytokine receptor family. Monomer. Heterodimer with IFNGR2, to form the IFNG receptor complex. Interacts with JAK1. Interacts (when phosphorylated) with STAT1. Interacts with SOCS1. Post-translationally, phosphorylated at Ser/Thr residues. Phosphorylation of Tyr-445 is required for IFNG receptor signal transduction. Influenza virus infection leads to phosphorylation in a CSNK1A1-dependent manner. In terms of processing, ubiquitinated after phosphorylation in a CSNK1A1-dependent manner, leading to the lysosome-dependent degradation. Proteasomally degraded through 'Lys-48'-mediated ubiquitination. Ubiquitination is necessary for efficient IFNGR1 signaling.

It is found in the cell membrane. In terms of biological role, receptor subunit for interferon gamma/INFG that plays crucial roles in antimicrobial, antiviral, and antitumor responses by activating effector immune cells and enhancing antigen presentation (, PubMed:20926559, PubMed:27286456). Associates with transmembrane accessory factor IFNGR2 to form a functional receptor. Upon ligand binding, the intracellular domain of IFNGR1 opens out to allow association of downstream signaling components JAK1 and JAK2. In turn, activated JAK1 phosphorylates IFNGR1 to form a docking site for STAT1. Subsequent phosphorylation of STAT1 leads to its dimerization, translocation to the nucleus, and stimulation of target gene transcription. STAT3 can also be activated in a similar manner although activation seems weaker. IFNGR1 intracellular domain phosphorylation also provides a docking site for SOCS1 that regulates the JAK-STAT pathway by competing with STAT1 binding to IFNGR1. This chain is Interferon gamma receptor 1, found in Mus musculus (Mouse).